We begin with the raw amino-acid sequence, 345 residues long: Tyrosine-binding protein (345 aa).

The N-terminal stretch at 1–23 (MIKSKKILSLIIAGVLGVSMLTG) is a signal peptide. Cys-24 carries N-palmitoyl cysteine lipidation. Residue Cys-24 is the site of S-diacylglycerol cysteine attachment.

In terms of assembly, the complex is probably composed of two ATP-binding proteins (CDR20291_0806), two transmembrane proteins (CDR20291_0807) and a solute-binding protein (CDR20291_0805).

Its subcellular location is the cell membrane. In terms of biological role, probably part of an ABC transporter complex involved in tyrosine uptake. May also import phenylalanine. This Clostridioides difficile (strain R20291) (Peptoclostridium difficile) protein is Tyrosine-binding protein.